Consider the following 212-residue polypeptide: Small ribosomal subunit protein uS3 (212 aa).

The KH type-2 domain maps to 39-108; that stretch reads IKNYIKERYK…EITISVVEVR (70 aa).

It belongs to the universal ribosomal protein uS3 family. In terms of assembly, part of the 30S ribosomal subunit. Forms a tight complex with proteins S10 and S14.

Its function is as follows. Binds the lower part of the 30S subunit head. Binds mRNA in the 70S ribosome, positioning it for translation. This chain is Small ribosomal subunit protein uS3, found in Aquifex aeolicus (strain VF5).